The primary structure comprises 51 residues: Large ribosomal subunit protein bL33 (51 aa).

The segment at 1–21 is disordered; it reads MRDKIKLESSAGTGHFYTTTK. Polar residues predominate over residues 10-20; the sequence is SAGTGHFYTTT.

The protein belongs to the bacterial ribosomal protein bL33 family.

The polypeptide is Large ribosomal subunit protein bL33 (rpmG) (Neisseria meningitidis serogroup A / serotype 4A (strain DSM 15465 / Z2491)).